Consider the following 886-residue polypeptide: Leucine-rich repeat-containing protein sog2 (886 aa).

LRR repeat units lie at residues 28–49 (NALT…QLER), 53–74 (RIAR…ILKF), 76–97 (RLRY…LCRL), 99–120 (SLEI…FGAL), 122–143 (NLKV…IAHM), and 145–166 (NLEI…IANN). Disordered stretches follow at residues 236-288 (SPGM…THPP), 301-364 (SPRQ…ASPI), 394-431 (PTQL…STRL), and 455-483 (RIFA…TNDS). Residues 243–277 (VTPSPHSHSPAGHQQSTPKSTLSKTNENSEGTLYD) are compositionally biased toward polar residues. Position 301 is a phosphoserine (Ser-301). Composition is skewed to polar residues over residues 312–347 (SLAT…SSVA), 394–406 (PTQL…TSAI), and 419–431 (SNST…STRL). A Phosphoserine modification is found at Ser-464.

Its subcellular location is the cytoplasm. It localises to the nucleus. The sequence is that of Leucine-rich repeat-containing protein sog2 from Schizosaccharomyces pombe (strain 972 / ATCC 24843) (Fission yeast).